A 585-amino-acid chain; its full sequence is YTH domain-containing family protein 3 (585 aa).

Disordered stretches follow at residues 1–52, 243–277, and 304–351; these read MSAT…YPPM, RKPA…MNIG, and PQPL…QQLQ. Position 2 is an N-acetylserine (serine 2). Residues 15–24 show a composition bias toward polar residues; it reads NKVSVQNGSI. A Phosphoserine modification is found at serine 23. The segment covering 244–254 has biased composition (basic residues); the sequence is KPAKPQPKLKP. The segment covering 329-351 has biased composition (low complexity); that stretch reads QQQQGPQPQAQPHQVQPQQQQLQ. The 135-residue stretch at 416-550 folds into the YTH domain; the sequence is GRVFIIKSYS…EKAKQVLKII (135 aa). RNA-binding positions include 422–424, aspartate 428, 438–439, asparagine 468, tryptophan 492, and tryptophan 497; these read KSY and WC.

This sequence belongs to the YTHDF family. YTHDF3 subfamily. Interacts with CNOT1; promoting recruitment of the CCR4-NOT complex. Interacts with YTHDF1. Interacts with YTHDF2. Interacts with PAN3. In terms of processing, (Microbial infection) Proteolytically cleaved by HIV-1 protease when incorporated into HIV-1 particles in a nucleocapsid-dependent-manner. Cleavage by HIV-1 protease probably ensures optimal infectivity of the mature virion.

Its subcellular location is the cytoplasm. It localises to the cytosol. The protein localises to the P-body. It is found in the stress granule. Its function is as follows. Specifically recognizes and binds N6-methyladenosine (m6A)-containing RNAs, and regulates their stability. M6A is a modification present at internal sites of mRNAs and some non-coding RNAs and plays a role in mRNA stability and processing. Acts as a regulator of mRNA stability by promoting degradation of m6A-containing mRNAs via interaction with the CCR4-NOT complex or PAN3. The YTHDF paralogs (YTHDF1, YTHDF2 and YTHDF3) share m6A-containing mRNAs targets and act redundantly to mediate mRNA degradation and cellular differentiation. Acts as a negative regulator of type I interferon response by down-regulating interferon-stimulated genes (ISGs) expression: acts by binding to FOXO3 mRNAs. Binds to FOXO3 mRNAs independently of METTL3-mediated m6A modification. Can also act as a regulator of mRNA stability in cooperation with YTHDF2 by binding to m6A-containing mRNA and promoting their degradation. Recognizes and binds m6A-containing circular RNAs (circRNAs); circRNAs are generated through back-splicing of pre-mRNAs, a non-canonical splicing process promoted by dsRNA structures across circularizing exons. Promotes formation of phase-separated membraneless compartments, such as P-bodies or stress granules, by undergoing liquid-liquid phase separation upon binding to mRNAs containing multiple m6A-modified residues: polymethylated mRNAs act as a multivalent scaffold for the binding of YTHDF proteins, juxtaposing their disordered regions and thereby leading to phase separation. The resulting mRNA-YTHDF complexes then partition into different endogenous phase-separated membraneless compartments, such as P-bodies, stress granules or neuronal RNA granules. May also recognize and bind N1-methyladenosine (m1A)-containing mRNAs: inhibits trophoblast invasion by binding to m1A-methylated transcripts of IGF1R, promoting their degradation. Functionally, has some antiviral activity against HIV-1 virus: incorporated into HIV-1 particles in a nucleocapsid-dependent manner and reduces viral infectivity in the next cycle of infection. May interfere with this early step of the viral life cycle by binding to N6-methyladenosine (m6A) modified sites on the HIV-1 RNA genome. The sequence is that of YTH domain-containing family protein 3 from Homo sapiens (Human).